We begin with the raw amino-acid sequence, 279 residues long: Dermonecrotic toxin LbSicTox-alphaIB1a (279 aa).

His11 is a catalytic residue. Mg(2+) contacts are provided by Glu31 and Asp33. Residue His47 is the Nucleophile of the active site. Intrachain disulfides connect Cys51-Cys57 and Cys53-Cys196. Position 91 (Asp91) interacts with Mg(2+).

It belongs to the arthropod phospholipase D family. Class II subfamily. Class IIa sub-subfamily. Requires Mg(2+) as cofactor. In terms of tissue distribution, expressed by the venom gland.

The protein localises to the secreted. It catalyses the reaction an N-(acyl)-sphingosylphosphocholine = an N-(acyl)-sphingosyl-1,3-cyclic phosphate + choline. The enzyme catalyses an N-(acyl)-sphingosylphosphoethanolamine = an N-(acyl)-sphingosyl-1,3-cyclic phosphate + ethanolamine. It carries out the reaction a 1-acyl-sn-glycero-3-phosphocholine = a 1-acyl-sn-glycero-2,3-cyclic phosphate + choline. The catalysed reaction is a 1-acyl-sn-glycero-3-phosphoethanolamine = a 1-acyl-sn-glycero-2,3-cyclic phosphate + ethanolamine. Its function is as follows. Dermonecrotic toxins cleave the phosphodiester linkage between the phosphate and headgroup of certain phospholipids (sphingolipid and lysolipid substrates), forming an alcohol (often choline) and a cyclic phosphate. This toxin acts on sphingomyelin (SM) with high activity (about 30.5-31.5 U/mg). It may also act on ceramide phosphoethanolamine (CPE), lysophosphatidylcholine (LPC) and lysophosphatidylethanolamine (LPE), but not on lysophosphatidylserine (LPS), and lysophosphatidylglycerol (LPG). It acts by transphosphatidylation, releasing exclusively cyclic phosphate products as second products. Induces dermonecrosis, hemolysis, increased vascular permeability, edema, inflammatory response, and platelet aggregation. Is lethal to mice. The polypeptide is Dermonecrotic toxin LbSicTox-alphaIB1a (Loxosceles boneti (North American fiddleback spider)).